A 315-amino-acid chain; its full sequence is Olfactory receptor 8J2 (315 aa).

Residues 1–24 (MASGNLTWVTEFILVGVSDDPELQ) lie on the Extracellular side of the membrane. An N-linked (GlcNAc...) asparagine glycan is attached at asparagine 5. The helical transmembrane segment at 25-45 (IPLFLVFLVLYLLTVAGNLGI) threads the bilayer. The Cytoplasmic portion of the chain corresponds to 46-57 (ITLTSVDPQLQT). The helical transmembrane segment at 58 to 78 (PMYFFLRHLAIINLCNSTVVA) threads the bilayer. At 79 to 97 (PKMLVNFLVTKKTISYYGC) the chain is on the extracellular side. A disulfide bond links cysteine 97 and cysteine 179. The helical transmembrane segment at 98–118 (AAQLGGFLVFIVAEIFTLAAM) threads the bilayer. At 119-143 (AYDRYVAIWSPLLYAVVVSPKVCRL) the chain is on the cytoplasmic side. Residues 144–164 (LVSLTYLQSLITALTVSSCVF) traverse the membrane as a helical segment. Residues 165–205 (SVSYCSSNIINHFYCDDVPLLALSCSDTYIPETAVFIFSGT) lie on the Extracellular side of the membrane. A helical membrane pass occupies residues 206–226 (NLLFSMIVVLISYFNIVITIL). The Cytoplasmic segment spans residues 227-239 (RIRSSEGRQKAFS). Residues 240–260 (TCASHMIAVVVFYGTLLFMYL) traverse the membrane as a helical segment. The Extracellular segment spans residues 261–271 (QPRSNHSLDTD). A glycan (N-linked (GlcNAc...) asparagine) is linked at asparagine 265. A helical transmembrane segment spans residues 272–292 (KMASVFYTLVIPVLNPLIYSL). The Cytoplasmic segment spans residues 293–315 (RNKNVKDALKRFLDNPCRSLKLM).

Belongs to the G-protein coupled receptor 1 family.

It localises to the membrane. Functionally, odorant receptor. In Homo sapiens (Human), this protein is Olfactory receptor 8J2 (OR8J2).